We begin with the raw amino-acid sequence, 462 residues long: MDKKQLLRNLPKIDELLKEEIVNRYLQENSRTLVVDSLRQSIDYYRGEILKNNIDSFTKENVVNYFIDTLEENKSTKFKKVINATGVVIHTNLGRSLLAKEAIENVVKVSENYSNLEYDLKEGKRGSRYSHVEELIKKVTGAEAAMVVNNNAAAVMLALNTLCEEREAIVSRGQLVEIGGSFRVPDVMKFSRAHLVEVGTTNRTHLYDYENNINENTGVLLKVHTSNFKIMGFTEEVSSEEMVQLGGKYKLPVMEDIGSGTLVDFSKYGFTYEPTVQSSLEKGVDVVTFSGDKMLGGPQAGIIVGKKKYIDKMKKNQLTRALRIDKMTLAALEGTLKCYIDEKEAIENIPTLNMILSSKDIHKKRAQRLKRRLQNNVKDFNFKVSEDLSMVGGGSMPGERIPTYVVKVNSDKITAEKIEEKLRLSKNPIIVRVSKDEVILDVRTLFERDFNIIVEEFKKLLK.

K293 carries the N6-(pyridoxal phosphate)lysine modification.

It belongs to the SelA family. Requires pyridoxal 5'-phosphate as cofactor.

Its subcellular location is the cytoplasm. The enzyme catalyses L-seryl-tRNA(Sec) + selenophosphate + H(+) = L-selenocysteinyl-tRNA(Sec) + phosphate. The protein operates within aminoacyl-tRNA biosynthesis; selenocysteinyl-tRNA(Sec) biosynthesis; selenocysteinyl-tRNA(Sec) from L-seryl-tRNA(Sec) (bacterial route): step 1/1. In terms of biological role, converts seryl-tRNA(Sec) to selenocysteinyl-tRNA(Sec) required for selenoprotein biosynthesis. This is L-seryl-tRNA(Sec) selenium transferase from Clostridium botulinum (strain ATCC 19397 / Type A).